The following is a 123-amino-acid chain: Small ribosomal subunit protein uS12 (123 aa).

D89 carries the 3-methylthioaspartic acid modification.

Belongs to the universal ribosomal protein uS12 family. In terms of assembly, part of the 30S ribosomal subunit. Contacts proteins S8 and S17. May interact with IF1 in the 30S initiation complex.

Its function is as follows. With S4 and S5 plays an important role in translational accuracy. Interacts with and stabilizes bases of the 16S rRNA that are involved in tRNA selection in the A site and with the mRNA backbone. Located at the interface of the 30S and 50S subunits, it traverses the body of the 30S subunit contacting proteins on the other side and probably holding the rRNA structure together. The combined cluster of proteins S8, S12 and S17 appears to hold together the shoulder and platform of the 30S subunit. In Syntrophotalea carbinolica (strain DSM 2380 / NBRC 103641 / GraBd1) (Pelobacter carbinolicus), this protein is Small ribosomal subunit protein uS12.